The primary structure comprises 434 residues: Perilipin-3 (434 aa).

The interval 1 to 22 is disordered; sequence MSADGAEADGSTQVTVEEPVQQ. Ser-2 is modified (N-acetylserine). Ser-31 is modified (phosphoserine). N6-acetyllysine is present on Lys-65. Ser-91 bears the Phosphoserine mark. A Glycyl lysine isopeptide (Lys-Gly) (interchain with G-Cter in SUMO1) cross-link involves residue Lys-122. Phosphoserine is present on residues Ser-130 and Ser-148. Residue Thr-170 is modified to Phosphothreonine. A phosphoserine mark is found at Ser-175 and Ser-179. Thr-216 carries the phosphothreonine modification. 2 positions are modified to phosphoserine: Ser-217 and Ser-241. At Tyr-251 the chain carries Phosphotyrosine. 2 coiled-coil regions span residues 252–277 and 353–377; these read EHSL…QVLS and TNVK…SSIH.

The protein belongs to the perilipin family. Homooligomer. Interacts with M6PR (via the cytoplasmic domain). Interacts with IGF2R (via the cytoplasmic domain). In terms of assembly, may exist as a homodimer. Phosphorylation at Tyr-251 by isoform 1 of CHKA (CHKalpha2) promotes dissociation from lipid droplets: dissociation is followed by recruitment of autophagosome machinery to lipid droplets and subsequent lipid droplet lipolysis.

It localises to the lipid droplet. It is found in the endosome membrane. The protein resides in the cytoplasm. Structural component of lipid droplets, which is required for the formation and maintenance of lipid storage droplets. Required for the transport of mannose 6-phosphate receptors (MPR) from endosomes to the trans-Golgi network. The protein is Perilipin-3 (PLIN3) of Homo sapiens (Human).